The sequence spans 631 residues: 1-deoxy-D-xylulose-5-phosphate synthase (631 aa).

Thiamine diphosphate is bound by residues His74 and 115–117; that span reads GHS. Asp146 is a binding site for Mg(2+). Residues 147–148, Asn175, Tyr286, and Glu368 each bind thiamine diphosphate; that span reads GA. Residue Asn175 participates in Mg(2+) binding.

The protein belongs to the transketolase family. DXPS subfamily. Homodimer. The cofactor is Mg(2+). Thiamine diphosphate serves as cofactor.

The enzyme catalyses D-glyceraldehyde 3-phosphate + pyruvate + H(+) = 1-deoxy-D-xylulose 5-phosphate + CO2. Its pathway is metabolic intermediate biosynthesis; 1-deoxy-D-xylulose 5-phosphate biosynthesis; 1-deoxy-D-xylulose 5-phosphate from D-glyceraldehyde 3-phosphate and pyruvate: step 1/1. Catalyzes the acyloin condensation reaction between C atoms 2 and 3 of pyruvate and glyceraldehyde 3-phosphate to yield 1-deoxy-D-xylulose-5-phosphate (DXP). This chain is 1-deoxy-D-xylulose-5-phosphate synthase, found in Natranaerobius thermophilus (strain ATCC BAA-1301 / DSM 18059 / JW/NM-WN-LF).